The following is a 100-amino-acid chain: Large ribosomal subunit protein uL23 (100 aa).

It belongs to the universal ribosomal protein uL23 family. As to quaternary structure, part of the 50S ribosomal subunit. Contacts protein L29, and trigger factor when it is bound to the ribosome.

In terms of biological role, one of the early assembly proteins it binds 23S rRNA. One of the proteins that surrounds the polypeptide exit tunnel on the outside of the ribosome. Forms the main docking site for trigger factor binding to the ribosome. The sequence is that of Large ribosomal subunit protein uL23 from Vibrio campbellii (strain ATCC BAA-1116).